Here is a 269-residue protein sequence, read N- to C-terminus: Phosphate import ATP-binding protein PstB (269 aa).

Residues Leu14–Ser253 form the ABC transporter domain. Gly46–Ser53 serves as a coordination point for ATP.

Belongs to the ABC transporter superfamily. Phosphate importer (TC 3.A.1.7) family. In terms of assembly, the complex is composed of two ATP-binding proteins (PstB), two transmembrane proteins (PstC and PstA) and a solute-binding protein (PstS).

It is found in the cell inner membrane. The catalysed reaction is phosphate(out) + ATP + H2O = ADP + 2 phosphate(in) + H(+). Its function is as follows. Part of the ABC transporter complex PstSACB involved in phosphate import. Responsible for energy coupling to the transport system. The sequence is that of Phosphate import ATP-binding protein PstB from Prochlorococcus marinus subsp. pastoris (strain CCMP1986 / NIES-2087 / MED4).